The following is a 688-amino-acid chain: Glycine--tRNA ligase beta subunit (688 aa).

This sequence belongs to the class-II aminoacyl-tRNA synthetase family. In terms of assembly, tetramer of two alpha and two beta subunits.

It localises to the cytoplasm. It catalyses the reaction tRNA(Gly) + glycine + ATP = glycyl-tRNA(Gly) + AMP + diphosphate. This is Glycine--tRNA ligase beta subunit from Lactobacillus delbrueckii subsp. bulgaricus (strain ATCC BAA-365 / Lb-18).